The primary structure comprises 324 residues: Glyoxylate/hydroxypyruvate reductase B (324 aa).

Residues R237 and E266 contribute to the active site. The Proton donor role is filled by H285.

Belongs to the D-isomer specific 2-hydroxyacid dehydrogenase family. GhrB subfamily. Homodimer.

It is found in the cytoplasm. It catalyses the reaction glycolate + NADP(+) = glyoxylate + NADPH + H(+). The enzyme catalyses (R)-glycerate + NAD(+) = 3-hydroxypyruvate + NADH + H(+). The catalysed reaction is (R)-glycerate + NADP(+) = 3-hydroxypyruvate + NADPH + H(+). In terms of biological role, catalyzes the NADPH-dependent reduction of glyoxylate and hydroxypyruvate into glycolate and glycerate, respectively. The sequence is that of Glyoxylate/hydroxypyruvate reductase B from Shigella flexneri serotype 5b (strain 8401).